The following is a 293-amino-acid chain: Putative F-box/kelch-repeat protein At4g34170 (293 aa).

Residues 9 to 55 (VKTMLMLHDDLILNCLARVSRSNHPTLSLVCKRFHSLLASVELYQTR) form the F-box domain. Kelch repeat units follow at residues 94 to 140 (NIDA…TLDG), 141 to 187 (KIYV…ESVR), and 226 to 272 (SYCV…LADY).

This is Putative F-box/kelch-repeat protein At4g34170 from Arabidopsis thaliana (Mouse-ear cress).